Here is a 616-residue protein sequence, read N- to C-terminus: Chaperone protein HscA (616 aa).

It belongs to the heat shock protein 70 family.

Its function is as follows. Chaperone involved in the maturation of iron-sulfur cluster-containing proteins. Has a low intrinsic ATPase activity which is markedly stimulated by HscB. Involved in the maturation of IscU. The sequence is that of Chaperone protein HscA from Shigella flexneri serotype 5b (strain 8401).